The primary structure comprises 417 residues: Calreticulin (417 aa).

Residues M1 to A17 form the signal peptide. Positions E18–E197 are N-domain. Q26 contributes to the Ca(2+) binding site. K48 is modified (N6-acetyllysine). Residues K62 and K64 each contribute to the Ca(2+) site. N6-(2-hydroxyisobutyryl)lysine is present on K64. A disulfide bridge links C105 with C137. Positions 109, 111, 128, and 135 each coordinate an alpha-D-glucoside. N6-acetyllysine is present on K159. A 1-1 repeat occupies V191–F202. The interval V191 to E255 is 4 X approximate repeats. Positions S193 to R278 are disordered. The P-domain stretch occupies residues D198–Y308. The segment covering K207–E251 has biased composition (basic and acidic residues). K209 is subject to N6-acetyllysine. Tandem repeats lie at residues D210–E221, D227–K238, D244–E255, G259–P269, G273–P283, and G287–P297. Positions D237–E270 are interaction with PPIB. Positions D252–W261 are enriched in acidic residues. Positions G259–P297 are 3 X approximate repeats. Residues D309 to L417 form a C-domain region. Position 317 (D317) interacts with an alpha-D-glucoside. A Ca(2+)-binding site is contributed by D328. N344 is a glycosylation site (N-linked (GlcNAc...) asparagine). Residues T350–L417 are disordered. The span at A352 to E379 shows a compositional bias: basic and acidic residues. A compositionally biased stretch (acidic residues) spans E380–V409. A Prevents secretion from ER motif is present at residues K414–L417.

The protein belongs to the calreticulin family. As to quaternary structure, monomer. Component of an EIF2 complex at least composed of CELF1/CUGBP1, CALR, CALR3, EIF2S1, EIF2S2, HSP90B1 and HSPA5. Interacts with PDIA3/ERp57 and SPACA9. Interacts with TRIM21. Interacts with NR3C1. Interacts with PPIB. Interacts (via P-domain) with PDIA5. Interacts with GABARAP. Interacts with HLA-E-B2M and HLA-G-B2M complexes. Interacts with HLA-F. Interacts with CLCC1.

The protein resides in the endoplasmic reticulum lumen. It localises to the cytoplasm. The protein localises to the cytosol. Its subcellular location is the secreted. It is found in the extracellular space. The protein resides in the extracellular matrix. It localises to the cell surface. The protein localises to the sarcoplasmic reticulum lumen. Its subcellular location is the cytoplasmic vesicle. It is found in the secretory vesicle. The protein resides in the cortical granule. It localises to the cytolytic granule. Functionally, calcium-binding chaperone that promotes folding, oligomeric assembly and quality control in the endoplasmic reticulum (ER) via the calreticulin/calnexin cycle. This lectin interacts transiently with almost all of the monoglucosylated glycoproteins that are synthesized in the ER. Interacts with the DNA-binding domain of NR3C1 and mediates its nuclear export. Involved in maternal gene expression regulation. May participate in oocyte maturation via the regulation of calcium homeostasis. Present in the cortical granules of non-activated oocytes, is exocytosed during the cortical reaction in response to oocyte activation and might participate in the block to polyspermy. The chain is Calreticulin from Homo sapiens (Human).